We begin with the raw amino-acid sequence, 523 residues long: 2-hydroxyisoflavanone synthase (523 aa).

Residues 2-22 (LVELAITLLVIALFIHLRPTL) traverse the membrane as a helical segment. Cysteine 450 is a binding site for heme.

This sequence belongs to the cytochrome P450 family. Heme serves as cofactor.

It localises to the microsome membrane. The catalysed reaction is (2S)-liquiritigenin + reduced [NADPH--hemoprotein reductase] + O2 = (2R,3S)-2,4',7-trihydroxyisoflavanone + oxidized [NADPH--hemoprotein reductase] + H2O + H(+). It carries out the reaction (2S)-naringenin + reduced [NADPH--hemoprotein reductase] + O2 = 2-hydroxy-2,3-dihydrogenistein + oxidized [NADPH--hemoprotein reductase] + H2O + H(+). Functionally, 2-hydroxyisoflavanone synthase, which catalyzes the hydroxylation associated with 1,2-aryl migration of flavanones. Converts liquiritigenin and naringenin into highly unstable precursors of the isoflavones daidzein and genistein. Acts only on substrates with (2S)-chirality. The protein is 2-hydroxyisoflavanone synthase (CYP93C2) of Glycyrrhiza echinata (Licorice).